Reading from the N-terminus, the 184-residue chain is Protein PLANT CADMIUM RESISTANCE 5 (184 aa).

Polar residues predominate over residues 1-26 (MGRPVGQTNQAQPSVQHTASPSNKVS). The disordered stretch occupies residues 1–33 (MGRPVGQTNQAQPSVQHTASPSNKVSHNGGIGK). A helical transmembrane segment spans residues 94–114 (AGLLYGALFFTGASFVYSYMF).

Belongs to the cornifelin family.

It is found in the membrane. Functionally, may be involved in heavy metals transport. The polypeptide is Protein PLANT CADMIUM RESISTANCE 5 (PCR5) (Arabidopsis thaliana (Mouse-ear cress)).